The primary structure comprises 345 residues: MKLVIDDACYAYREIFDHFGEITAISGSDINANSVKDADVLIIRSRTKVNQELLSGSQVKFIGSTVVGLDHIDQNYLKTKGTQFFSAQSCNSMAVAEFVISTIVNLVDELNFDYQKKTLGIIGVGNVGTKLAEKAKLMGIKTLLNDPPRQIRENLDNFVDLNTALSADIVTFHTPLTVNGEHPSYQLLNENNFHHITNKTILFNAARGGVIKETIWKKHKTLANIIDCWEDEPNINPSLQNTAYLATPHIAGHSVDAKFMGSFMVYEALCTFLGKKQDKNIRNLINLSELSIDKSNLKDTLNEIYDFQQDANAIKDVNNFEDYRRNYPIRYEWHHFKSKTVLPIA.

Substrate is bound at residue serine 45. Positions 146 and 174 each coordinate NAD(+). Arginine 207 is a catalytic residue. Aspartate 227 contacts NAD(+). Glutamate 232 is a catalytic residue. Histidine 249 serves as the catalytic Proton donor. Residue glycine 252 participates in NAD(+) binding.

This sequence belongs to the D-isomer specific 2-hydroxyacid dehydrogenase family. PdxB subfamily. As to quaternary structure, homodimer.

It is found in the cytoplasm. The catalysed reaction is 4-phospho-D-erythronate + NAD(+) = (R)-3-hydroxy-2-oxo-4-phosphooxybutanoate + NADH + H(+). Its pathway is cofactor biosynthesis; pyridoxine 5'-phosphate biosynthesis; pyridoxine 5'-phosphate from D-erythrose 4-phosphate: step 2/5. Catalyzes the oxidation of erythronate-4-phosphate to 3-hydroxy-2-oxo-4-phosphonooxybutanoate. The sequence is that of Erythronate-4-phosphate dehydrogenase from Ruthia magnifica subsp. Calyptogena magnifica.